Consider the following 372-residue polypeptide: Putative KilA-N domain-containing protein L32 (372 aa).

The segment covering M1–R12 has biased composition (basic residues). The tract at residues M1 to F129 is disordered. Positions R14 to R36 are enriched in basic and acidic residues. Over residues S37 to S53 the composition is skewed to basic residues. Residues E79 to S120 are compositionally biased toward acidic residues. Residues K151 to W255 enclose the KilA-N domain.

This chain is Putative KilA-N domain-containing protein L32, found in Acanthamoeba polyphaga (Amoeba).